The primary structure comprises 432 residues: Glutamyl-tRNA reductase (432 aa).

Substrate is bound by residues 50-53, S110, 115-117, and Q121; these read TCNR and ETQ. C51 functions as the Nucleophile in the catalytic mechanism. 190–195 is a binding site for NADP(+); it reads GAGEMS.

Belongs to the glutamyl-tRNA reductase family. Homodimer.

The catalysed reaction is (S)-4-amino-5-oxopentanoate + tRNA(Glu) + NADP(+) = L-glutamyl-tRNA(Glu) + NADPH + H(+). The protein operates within porphyrin-containing compound metabolism; protoporphyrin-IX biosynthesis; 5-aminolevulinate from L-glutamyl-tRNA(Glu): step 1/2. In terms of biological role, catalyzes the NADPH-dependent reduction of glutamyl-tRNA(Glu) to glutamate 1-semialdehyde (GSA). The chain is Glutamyl-tRNA reductase from Aliarcobacter butzleri (strain RM4018) (Arcobacter butzleri).